We begin with the raw amino-acid sequence, 197 residues long: Recombination protein RecR (197 aa).

The C4-type zinc-finger motif lies at 56–71 (CPVCGTLDTRAPCSIC). Positions 79–174 (TLICVVRDVA…TVSGLAQGVP (96 aa)) constitute a Toprim domain.

Belongs to the RecR family.

In terms of biological role, may play a role in DNA repair. It seems to be involved in an RecBC-independent recombinational process of DNA repair. It may act with RecF and RecO. The sequence is that of Recombination protein RecR from Rhodospirillum rubrum (strain ATCC 11170 / ATH 1.1.1 / DSM 467 / LMG 4362 / NCIMB 8255 / S1).